Consider the following 733-residue polypeptide: Photosystem I P700 chlorophyll a apoprotein A2 (733 aa).

The next 8 helical transmembrane spans lie at 46–69, 134–157, 174–198, 272–290, 329–352, 368–394, 416–438, and 516–534; these read IFAS…FHVA, LYLG…LHLQ, LNHH…HVAL, IAHH…GHMY, LHIQ…QHMY, AALY…IFFV, AIIS…LYIH, and FLVH…LILV. Residues C558 and C567 each contribute to the [4Fe-4S] cluster site. Helical transmembrane passes span 574 to 595 and 642 to 664; these read AFYL…YWHW and LSVW…MFLI. The chlorophyll a site is built by H653, M661, and Y669. Residue W670 coordinates phylloquinone. The helical transmembrane segment at 706–726 threads the bilayer; it reads LVGLVHFAVGYILTYAAFVIA.

It belongs to the PsaA/PsaB family. As to quaternary structure, the PsaA/B heterodimer binds the P700 chlorophyll special pair and subsequent electron acceptors. PSI consists of a core antenna complex that captures photons, and an electron transfer chain that converts photonic excitation into a charge separation. The eukaryotic PSI reaction center is composed of at least 11 subunits. It depends on P700 is a chlorophyll a/chlorophyll a' dimer, A0 is one or more chlorophyll a, A1 is one or both phylloquinones and FX is a shared 4Fe-4S iron-sulfur center. as a cofactor.

The protein resides in the plastid. It is found in the chloroplast thylakoid membrane. It carries out the reaction reduced [plastocyanin] + hnu + oxidized [2Fe-2S]-[ferredoxin] = oxidized [plastocyanin] + reduced [2Fe-2S]-[ferredoxin]. In terms of biological role, psaA and PsaB bind P700, the primary electron donor of photosystem I (PSI), as well as the electron acceptors A0, A1 and FX. PSI is a plastocyanin/cytochrome c6-ferredoxin oxidoreductase, converting photonic excitation into a charge separation, which transfers an electron from the donor P700 chlorophyll pair to the spectroscopically characterized acceptors A0, A1, FX, FA and FB in turn. Oxidized P700 is reduced on the lumenal side of the thylakoid membrane by plastocyanin or cytochrome c6. In Trieres chinensis (Marine centric diatom), this protein is Photosystem I P700 chlorophyll a apoprotein A2.